A 263-amino-acid chain; its full sequence is Tryptophan 2,3-dioxygenase (263 aa).

Substrate is bound by residues 32–36 (FIVIH), tyrosine 94, and arginine 98. Histidine 221 is a binding site for heme. Residue threonine 235 participates in substrate binding.

Belongs to the tryptophan 2,3-dioxygenase family. Homotetramer. The cofactor is heme.

The enzyme catalyses L-tryptophan + O2 = N-formyl-L-kynurenine. It participates in amino-acid degradation; L-tryptophan degradation via kynurenine pathway; L-kynurenine from L-tryptophan: step 1/2. Its function is as follows. Heme-dependent dioxygenase that catalyzes the oxidative cleavage of the L-tryptophan (L-Trp) pyrrole ring and converts L-tryptophan to N-formyl-L-kynurenine. Catalyzes the oxidative cleavage of the indole moiety. This is Tryptophan 2,3-dioxygenase from Caulobacter vibrioides (strain ATCC 19089 / CIP 103742 / CB 15) (Caulobacter crescentus).